The following is a 120-amino-acid chain: Superoxide dismutase [Cu-Zn] (120 aa).

Residues histidine 11, histidine 13, and histidine 28 each coordinate Cu cation. The disordered stretch occupies residues 16 to 52 (GDTTNGCMSTGPHFNPTGKEHGAPQDENRHAGDLGNI). Residues cysteine 22 and cysteine 112 are joined by a disulfide bond. Residues histidine 28, histidine 36, histidine 45, and aspartate 48 each coordinate Zn(2+). Positions 33 to 47 (GKEHGAPQDENRHAG) are enriched in basic and acidic residues. A Cu cation-binding site is contributed by histidine 85.

It belongs to the Cu-Zn superoxide dismutase family. In terms of assembly, homodimer. The cofactor is Cu cation. Requires Zn(2+) as cofactor.

The protein resides in the cytoplasm. The enzyme catalyses 2 superoxide + 2 H(+) = H2O2 + O2. Destroys radicals which are normally produced within the cells and which are toxic to biological systems. The chain is Superoxide dismutase [Cu-Zn] (sodC) from Aspergillus japonicus.